A 338-amino-acid polypeptide reads, in one-letter code: Large ribosomal subunit protein uL3 (338 aa).

2 disordered regions span residues 230-256 (HRKG…RPGQ) and 315-338 (PARP…SQQP).

Belongs to the universal ribosomal protein uL3 family. In terms of assembly, part of the 50S ribosomal subunit. Forms a cluster with proteins L14 and L24e.

Its function is as follows. One of the primary rRNA binding proteins, it binds directly near the 3'-end of the 23S rRNA, where it nucleates assembly of the 50S subunit. The polypeptide is Large ribosomal subunit protein uL3 (Pyrobaculum arsenaticum (strain DSM 13514 / JCM 11321 / PZ6)).